We begin with the raw amino-acid sequence, 142 residues long: Cytochrome b5-related protein (142 aa).

Positions 16–100 (PTYRNSAPVT…IAKYKVRDAY (85 aa)) constitute a Cytochrome b5 heme-binding domain. Residues H59 and H82 each contribute to the heme site.

The protein belongs to the cytochrome b5 family.

Functionally, may play a role in muscle cell metabolism. This chain is Cytochrome b5-related protein (Cyt-b5-r), found in Drosophila virilis (Fruit fly).